The following is a 778-amino-acid chain: Endonuclease MutS2 (778 aa).

An ATP-binding site is contributed by Gly332–Thr339. One can recognise a Smr domain in the interval Ile703 to Lys778.

The protein belongs to the DNA mismatch repair MutS family. MutS2 subfamily. As to quaternary structure, homodimer. Binds to stalled ribosomes, contacting rRNA.

Functionally, endonuclease that is involved in the suppression of homologous recombination and thus may have a key role in the control of bacterial genetic diversity. Acts as a ribosome collision sensor, splitting the ribosome into its 2 subunits. Detects stalled/collided 70S ribosomes which it binds and splits by an ATP-hydrolysis driven conformational change. Acts upstream of the ribosome quality control system (RQC), a ribosome-associated complex that mediates the extraction of incompletely synthesized nascent chains from stalled ribosomes and their subsequent degradation. Probably generates substrates for RQC. This is Endonuclease MutS2 from Fusobacterium nucleatum subsp. nucleatum (strain ATCC 25586 / DSM 15643 / BCRC 10681 / CIP 101130 / JCM 8532 / KCTC 2640 / LMG 13131 / VPI 4355).